A 204-amino-acid polypeptide reads, in one-letter code: N-(5'-phosphoribosyl)anthranilate isomerase (204 aa).

The protein belongs to the TrpF family.

It catalyses the reaction N-(5-phospho-beta-D-ribosyl)anthranilate = 1-(2-carboxyphenylamino)-1-deoxy-D-ribulose 5-phosphate. It functions in the pathway amino-acid biosynthesis; L-tryptophan biosynthesis; L-tryptophan from chorismate: step 3/5. The protein is N-(5'-phosphoribosyl)anthranilate isomerase of Bacillus anthracis (strain A0248).